Consider the following 383-residue polypeptide: UDP-N-acetylglucosamine--N-acetylmuramyl-(pentapeptide) pyrophosphoryl-undecaprenol N-acetylglucosamine transferase (383 aa).

UDP-N-acetyl-alpha-D-glucosamine-binding positions include 10 to 12 (TGG), Asn124, Arg165, Ser190, Ile245, and Gln290. Residues 363–383 (SPFGQAREPGQKPARPPDPAS) form a disordered region.

It belongs to the glycosyltransferase 28 family. MurG subfamily.

It is found in the cell inner membrane. The catalysed reaction is di-trans,octa-cis-undecaprenyl diphospho-N-acetyl-alpha-D-muramoyl-L-alanyl-D-glutamyl-meso-2,6-diaminopimeloyl-D-alanyl-D-alanine + UDP-N-acetyl-alpha-D-glucosamine = di-trans,octa-cis-undecaprenyl diphospho-[N-acetyl-alpha-D-glucosaminyl-(1-&gt;4)]-N-acetyl-alpha-D-muramoyl-L-alanyl-D-glutamyl-meso-2,6-diaminopimeloyl-D-alanyl-D-alanine + UDP + H(+). It functions in the pathway cell wall biogenesis; peptidoglycan biosynthesis. Its function is as follows. Cell wall formation. Catalyzes the transfer of a GlcNAc subunit on undecaprenyl-pyrophosphoryl-MurNAc-pentapeptide (lipid intermediate I) to form undecaprenyl-pyrophosphoryl-MurNAc-(pentapeptide)GlcNAc (lipid intermediate II). The sequence is that of UDP-N-acetylglucosamine--N-acetylmuramyl-(pentapeptide) pyrophosphoryl-undecaprenol N-acetylglucosamine transferase from Anaeromyxobacter dehalogenans (strain 2CP-1 / ATCC BAA-258).